We begin with the raw amino-acid sequence, 302 residues long: Aliphatic sulfonates import ATP-binding protein SsuB (302 aa).

Residues proline 30–alanine 57 show a composition bias toward low complexity. A disordered region spans residues proline 30–alanine 65. Positions isoleucine 70 to leucine 284 constitute an ABC transporter domain. Glycine 102–serine 109 contributes to the ATP binding site.

Belongs to the ABC transporter superfamily. Aliphatic sulfonates importer (TC 3.A.1.17.2) family. In terms of assembly, the complex is composed of two ATP-binding proteins (SsuB), two transmembrane proteins (SsuC) and a solute-binding protein (SsuA).

It localises to the cell membrane. The enzyme catalyses ATP + H2O + aliphatic sulfonate-[sulfonate-binding protein]Side 1 = ADP + phosphate + aliphatic sulfonateSide 2 + [sulfonate-binding protein]Side 1.. Part of the ABC transporter complex SsuABC involved in aliphatic sulfonates import. Responsible for energy coupling to the transport system. The chain is Aliphatic sulfonates import ATP-binding protein SsuB from Frankia casuarinae (strain DSM 45818 / CECT 9043 / HFP020203 / CcI3).